Here is a 604-residue protein sequence, read N- to C-terminus: Complement factor I (604 aa).

Residues 1–18 form the signal peptide; it reads MKLALLILLLLNPHLSSS. Intrachain disulfides connect C36–C260, C46–C57, C51–C62, C64–C96, C70–C89, C78–C109, C144–C186, C157–C219, C191–C201, C234–C252, C246–C261, C264–C276, C271–C289, C283–C298, C349–C474, C387–C403, C395–C465, C488–C552, C516–C531, and C542–C571. Residue N40 is glycosylated (N-linked (GlcNAc...) asparagine). One can recognise a Kazal-like domain in the interval 58 to 111; it reads IEGTCACKLPYQCPKAGTPVCATNGRGYPTYCHLKSFECLHPEIKFSNNGTCTA. 3 N-linked (GlcNAc...) asparagine glycosylation sites follow: N106, N116, and N182. An SRCR domain is found at 117-217; the sequence is VSLIYGSTDT…SKAPHGLAGV (101 aa). LDL-receptor class A domains follow at residues 218–262 and 263–299; these read VCYT…LCCK and GCRG…SGCE. Ca(2+)-binding residues include K244, D247, V249, D251, D257, and E258. Positions 284, 286, 288, 294, and 295 each coordinate Ca(2+). Residues 362 to 595 enclose the Peptidase S1 domain; the sequence is VVGGKPAEMG…YFDWISYYVG (234 aa). Active-site charge relay system residues include H402 and D450. N515 is a glycosylation site (N-linked (GlcNAc...) asparagine). S546 (charge relay system) is an active-site residue. Residue N557 is glycosylated (N-linked (GlcNAc...) asparagine).

This sequence belongs to the peptidase S1 family. As to quaternary structure, heterodimer of a light and heavy chains; disulfide-linked. The fully processed and mature protein circulates as a zymogen, and is allosterically activated by substrate-induced remodeling of the active site. Interacts with C3b. Interacts with complement factor H. As to expression, expressed in the liver by hepatocytes. Also present in other cells such as monocytes, fibroblasts or keratinocytes.

The protein localises to the secreted. It is found in the extracellular space. The enzyme catalyses Inactivates complement subcomponents C3b, iC3b and C4b by proteolytic cleavage.. Its function is as follows. Trypsin-like serine protease that plays an essential role in regulating the immune response by controlling all complement pathways. Inhibits these pathways by cleaving three peptide bonds in the alpha-chain of C3b and two bonds in the alpha-chain of C4b thereby inactivating these proteins. Essential cofactors for these reactions include factor H and C4BP in the fluid phase and membrane cofactor protein/CD46 and CR1 on cell surfaces. The presence of these cofactors on healthy cells allows degradation of deposited C3b by CFI in order to prevent undesired complement activation, while in apoptotic cells or microbes, the absence of such cofactors leads to C3b-mediated complement activation and subsequent opsonization. This chain is Complement factor I (Cfi), found in Rattus norvegicus (Rat).